The sequence spans 90 residues: Small ribosomal subunit protein uS19 (90 aa).

The protein belongs to the universal ribosomal protein uS19 family.

In terms of biological role, protein S19 forms a complex with S13 that binds strongly to the 16S ribosomal RNA. The chain is Small ribosomal subunit protein uS19 from Hydrogenovibrio crunogenus (strain DSM 25203 / XCL-2) (Thiomicrospira crunogena).